Reading from the N-terminus, the 340-residue chain is Ephrin-B3 (340 aa).

The first 27 residues, 1–27 (MGAPHFGPGGVQVGALLLLGFAGLVSG), serve as a signal peptide directing secretion. Residues 28–167 (LSLEPVYWNS…TRGMKVLLRV (140 aa)) enclose the Ephrin RBD domain. Residues 28–227 (LSLEPVYWNS…GPLPPPSMPA (200 aa)) are Extracellular-facing. Disulfide bonds link C62/C104 and C92/C156. The segment at 168-227 (GQSPRGGAVPRKPVSEMPMERDRGAAHSAEPGRDTIPGDPSSNATSRGAEGPLPPPSMPA) is disordered. Over residues 185–200 (PMERDRGAAHSAEPGR) the composition is skewed to basic and acidic residues. N210 is a glycosylation site (N-linked (GlcNAc...) asparagine). Residues 228–248 (VAGAAGGMALLLLGVAGAGGA) form a helical membrane-spanning segment. Residues 249–340 (MCWRRRRAKP…QSPPNIYYKV (92 aa)) lie on the Cytoplasmic side of the membrane. Positions 254–300 (RRAKPSESRHPGPGSFGRGGSLGLGGGGGMGPREAEPGELGIALRGG) are disordered. A compositionally biased stretch (gly residues) spans 267–284 (GSFGRGGSLGLGGGGGMG). The residue at position 271 (R271) is an Omega-N-methylarginine. S274 bears the Phosphoserine mark. Positions 338-340 (YKV) match the PDZ-binding motif.

It belongs to the ephrin family. In terms of assembly, interacts with GRIP1 and GRIP2. In terms of tissue distribution, expressed on lateral floor plate cells, specifically on commissural axon segments that have passed through the floor plate. Expressed in cells of the retinal ganglion cell layer during retinal axon guidance to the optic disk. Expressed in myogenic progenitor cells.

Its subcellular location is the membrane. Functionally, cell surface transmembrane ligand for Eph receptors, a family of receptor tyrosine kinases which are crucial for migration, repulsion and adhesion during neuronal, vascular and epithelial development. Binds promiscuously Eph receptors residing on adjacent cells, leading to contact-dependent bidirectional signaling into neighboring cells. The signaling pathway downstream of the receptor is referred to as forward signaling while the signaling pathway downstream of the ephrin ligand is referred to as reverse signaling. May play a pivotal role in forebrain function. Binds to, and induce the collapse of, commissural axons/growth cones in vitro. May play a role in constraining the orientation of longitudinally projecting axons. The sequence is that of Ephrin-B3 (Efnb3) from Mus musculus (Mouse).